A 476-amino-acid chain; its full sequence is Glutathione synthetase (476 aa).

Substrate is bound at residue arginine 117. Residue glutamate 137 coordinates ATP. Glutamate 137 and asparagine 139 together coordinate Mg(2+). Substrate contacts are provided by residues 141–144, 211–213, glutamine 217, and 267–270; these read ISSS, ERN, and RAGY. ATP-binding positions include lysine 308, 367-376, tyrosine 378, 400-403, and glutamate 426; these read KPQREGGGNN and MDKI. Mg(2+) is bound at residue glutamate 371. Position 452 (arginine 452) interacts with substrate. ATP is bound by residues lysine 454 and glutamate 460. 463-464 provides a ligand contact to substrate; sequence VA.

This sequence belongs to the eukaryotic GSH synthase family. As to quaternary structure, homodimer. It depends on Mg(2+) as a cofactor.

The catalysed reaction is gamma-L-glutamyl-L-cysteine + glycine + ATP = glutathione + ADP + phosphate + H(+). The protein operates within sulfur metabolism; glutathione biosynthesis; glutathione from L-cysteine and L-glutamate: step 2/2. The protein is Glutathione synthetase (gshB) of Dictyostelium discoideum (Social amoeba).